Consider the following 177-residue polypeptide: ATP synthase subunit delta (177 aa).

Belongs to the ATPase delta chain family. F-type ATPases have 2 components, F(1) - the catalytic core - and F(0) - the membrane proton channel. F(1) has five subunits: alpha(3), beta(3), gamma(1), delta(1), epsilon(1). F(0) has three main subunits: a(1), b(2) and c(10-14). The alpha and beta chains form an alternating ring which encloses part of the gamma chain. F(1) is attached to F(0) by a central stalk formed by the gamma and epsilon chains, while a peripheral stalk is formed by the delta and b chains.

The protein localises to the cell inner membrane. In terms of biological role, f(1)F(0) ATP synthase produces ATP from ADP in the presence of a proton or sodium gradient. F-type ATPases consist of two structural domains, F(1) containing the extramembraneous catalytic core and F(0) containing the membrane proton channel, linked together by a central stalk and a peripheral stalk. During catalysis, ATP synthesis in the catalytic domain of F(1) is coupled via a rotary mechanism of the central stalk subunits to proton translocation. This protein is part of the stalk that links CF(0) to CF(1). It either transmits conformational changes from CF(0) to CF(1) or is implicated in proton conduction. This chain is ATP synthase subunit delta, found in Vibrio parahaemolyticus serotype O3:K6 (strain RIMD 2210633).